The following is a 268-amino-acid chain: Tryptophan synthase alpha chain (268 aa).

Residues Glu49 and Asp60 each act as proton acceptor in the active site.

The protein belongs to the TrpA family. Tetramer of two alpha and two beta chains.

The catalysed reaction is (1S,2R)-1-C-(indol-3-yl)glycerol 3-phosphate + L-serine = D-glyceraldehyde 3-phosphate + L-tryptophan + H2O. Its pathway is amino-acid biosynthesis; L-tryptophan biosynthesis; L-tryptophan from chorismate: step 5/5. Its function is as follows. The alpha subunit is responsible for the aldol cleavage of indoleglycerol phosphate to indole and glyceraldehyde 3-phosphate. The polypeptide is Tryptophan synthase alpha chain (Yersinia pseudotuberculosis serotype O:3 (strain YPIII)).